A 250-amino-acid chain; its full sequence is UPF0524 protein C3orf70 homolog (250 aa).

A disordered region spans residues 201 to 250 (ESCDEDTEEGAELSSEEDYSPESSWEPDECTLLSPSQSDLEVIETIETTV). Over residues 202 to 229 (SCDEDTEEGAELSSEEDYSPESSWEPDE) the composition is skewed to acidic residues.

Belongs to the UPF0524 family.

In terms of biological role, may play a role in neuronal and neurobehavioral development. The protein is UPF0524 protein C3orf70 homolog of Bos taurus (Bovine).